The primary structure comprises 328 residues: Biotin synthase (328 aa).

Residues 48-277 (FVGNEVHLCS…GKRITVCGGR (230 aa)) form the Radical SAM core domain. C66, C70, and C73 together coordinate [4Fe-4S] cluster. Positions 142 and 202 each coordinate [2Fe-2S] cluster.

The protein belongs to the radical SAM superfamily. Biotin synthase family. As to quaternary structure, homodimer. It depends on [4Fe-4S] cluster as a cofactor. [2Fe-2S] cluster serves as cofactor.

It carries out the reaction (4R,5S)-dethiobiotin + (sulfur carrier)-SH + 2 reduced [2Fe-2S]-[ferredoxin] + 2 S-adenosyl-L-methionine = (sulfur carrier)-H + biotin + 2 5'-deoxyadenosine + 2 L-methionine + 2 oxidized [2Fe-2S]-[ferredoxin]. The protein operates within cofactor biosynthesis; biotin biosynthesis; biotin from 7,8-diaminononanoate: step 2/2. Functionally, catalyzes the conversion of dethiobiotin (DTB) to biotin by the insertion of a sulfur atom into dethiobiotin via a radical-based mechanism. The protein is Biotin synthase of Citrifermentans bemidjiense (strain ATCC BAA-1014 / DSM 16622 / JCM 12645 / Bem) (Geobacter bemidjiensis).